Reading from the N-terminus, the 250-residue chain is Sperm-egg fusion protein Juno (250 aa).

Residues 1-19 form the signal peptide; it reads MACWWPLLLELWTVMPTWA. Intrachain disulfides connect Cys27–Cys55, Cys47–Cys95, Cys56–Cys99, Cys79–Cys172, Cys86–Cys143, Cys132–Cys206, Cys136–Cys186, and Cys149–Cys166. The segment at 62–81 is important for interaction with IZUMO1; the sequence is WEAHLDVSPLYNFSLFHCGL. Asn73 carries N-linked (GlcNAc...) asparagine glycosylation. A lipid anchor (GPI-anchor amidated serine) is attached at Ser228. The propeptide occupies 229 to 250; that stretch reads SAPSWELSYTIMVCSLFLPFLS.

The protein belongs to the folate receptor family. Monomer. Interacts with IZUMO1; the interaction is direct. IZUMO1 and IZUMO1R/JUNO form a complex with 1:1 stoichiometry. Interacts with FCRL3/MAIA; FCRL3/MAIA replaces IZUMO1R/JUNO as IZUMO1 receptor after sperm-egg adhesion, thereby permitting species-specific gamete fusion. Interacts with WDR54. Post-translationally, the protein is rapidly cleaved following fertilization, being only weakly detectable in zona-intact fertilized eggs at telophase II and undetectable at the pronuclear stage. Sheding is probably required to block to polyspermy and ensuring egg fusion with a single sperm. Expressed in unfertilized oocytes (at protein level).

It is found in the cell membrane. It localises to the cell projection. The protein localises to the microvillus membrane. Receptor for IZUMO1 present at the cell surface of oocytes (oolemma), which is essential for species-specific gamete recognition and fertilization. The IZUMO1:IZUMO1R/JUNO interaction is a necessary adhesion event between sperm and egg that is required for fertilization but is not sufficient for cell fusion. The ligand-receptor interaction probably does not act as a membrane 'fusogen'. Does not bind folate. This Homo sapiens (Human) protein is Sperm-egg fusion protein Juno.